The sequence spans 96 residues: MAKYEILYIIRPNIEEEAKNALVARFDSILTDNGATVVESKTWEKRRLAYEIQDFREGLYHIVNVEANDDAALKEFDRLSKINADILRHMIVKIDA.

Belongs to the bacterial ribosomal protein bS6 family.

Functionally, binds together with bS18 to 16S ribosomal RNA. This Streptococcus pneumoniae serotype 2 (strain D39 / NCTC 7466) protein is Small ribosomal subunit protein bS6.